Here is a 270-residue protein sequence, read N- to C-terminus: ParA family protein MPN_688 (270 aa).

It belongs to the ParA family.

The protein is ParA family protein MPN_688 of Mycoplasma pneumoniae (strain ATCC 29342 / M129 / Subtype 1) (Mycoplasmoides pneumoniae).